A 694-amino-acid polypeptide reads, in one-letter code: Elongation factor G (694 aa).

Residues 6-288 (KLYRNIGIAA…GVIEYLPSPT (283 aa)) form the tr-type G domain. GTP-binding positions include 15-22 (AHVDAGKT), 86-90 (DTPGH), and 140-143 (NKMD).

Belongs to the TRAFAC class translation factor GTPase superfamily. Classic translation factor GTPase family. EF-G/EF-2 subfamily.

It is found in the cytoplasm. In terms of biological role, catalyzes the GTP-dependent ribosomal translocation step during translation elongation. During this step, the ribosome changes from the pre-translocational (PRE) to the post-translocational (POST) state as the newly formed A-site-bound peptidyl-tRNA and P-site-bound deacylated tRNA move to the P and E sites, respectively. Catalyzes the coordinated movement of the two tRNA molecules, the mRNA and conformational changes in the ribosome. The chain is Elongation factor G from Legionella pneumophila subsp. pneumophila (strain Philadelphia 1 / ATCC 33152 / DSM 7513).